The sequence spans 322 residues: Cytochrome c biogenesis protein CcsA (322 aa).

A run of 7 helical transmembrane segments spans residues 9-29, 43-63, 70-90, 142-162, 226-246, 259-274, and 287-307; these read ILTH…LITL, GMIA…IYSG, LYES…VPKI, MLLS…LLVI, VISL…VWAN, ETWA…IYSH, and AIVA…VNLL.

It belongs to the CcmF/CycK/Ccl1/NrfE/CcsA family. In terms of assembly, may interact with Ccs1.

It localises to the plastid. The protein localises to the chloroplast thylakoid membrane. In terms of biological role, required during biogenesis of c-type cytochromes (cytochrome c6 and cytochrome f) at the step of heme attachment. The sequence is that of Cytochrome c biogenesis protein CcsA from Chloranthus spicatus (Chulantree).